Here is a 588-residue protein sequence, read N- to C-terminus: Transport ATP-binding protein AarD (588 aa).

One can recognise an ABC transmembrane type-1 domain in the interval 24–316 (LRISMLLGVV…LGTYYHAKAQ (293 aa)). The next 6 membrane-spanning stretches (helical) occupy residues 29–49 (LLGV…AVIL), 62–82 (LLTP…LTVI), 149–169 (IIPI…ALIL), 170–190 (FATA…AADA), 250–270 (SGVL…YFGF), and 276–296 (LNFG…ALIL). The ABC transporter domain maps to 350–583 (IEANKLEIYS…EGPFARLLAH (234 aa)). 383–390 (GQSGAGKS) contributes to the ATP binding site.

It belongs to the ABC transporter superfamily.

The protein localises to the cell inner membrane. Functionally, somehow involved in the cytochrome D branch of aerobic respiration. Seems to be a component of a transport system. The sequence is that of Transport ATP-binding protein AarD (aarD) from Providencia stuartii.